Consider the following 2753-residue polypeptide: Maltase-glucoamylase (2753 aa).

At methionine 1–glutamate 13 the chain is on the cytoplasmic side. The helical; Signal-anchor for type II membrane protein transmembrane segment at isoleucine 14–leucine 34 threads the bilayer. The Lumenal segment spans residues alanine 35–leucine 2753. Residues serine 41–serine 87 form a disordered region. A compositionally biased stretch (low complexity) spans proline 44–proline 85. Residues alanine 88–lysine 134 form the P-type 1 domain. 3 cysteine pairs are disulfide-bonded: cysteine 90-cysteine 118, cysteine 101-cysteine 117, and cysteine 112-cysteine 130. The N-linked (GlcNAc...) asparagine glycan is linked to asparagine 135. Acarbose is bound at residue aspartate 289. Asparagine 295 carries an N-linked (GlcNAc...) asparagine glycan. The interval proline 356–valine 737 is maltase. Residue aspartate 413 coordinates acarbose. A sulfotyrosine mark is found at tyrosine 416 and tyrosine 425. Asparagine 457, asparagine 458, and asparagine 479 each carry an N-linked (GlcNAc...) asparagine glycan. Residue aspartate 529 is the Nucleophile of the active site. Residue glutamate 532 is part of the active site. Acarbose contacts are provided by arginine 612 and aspartate 628. Cysteines 659 and 670 form a disulfide. An acarbose-binding site is contributed by histidine 686. Asparagine 707, asparagine 749, asparagine 827, asparagine 885, asparagine 912, asparagine 977, asparagine 989, and asparagine 1255 each carry an N-linked (GlcNAc...) asparagine glycan. Positions tryptophan 954 to asparagine 1000 constitute a P-type 2 domain. 2 disulfide bridges follow: cysteine 966/cysteine 983 and cysteine 978/cysteine 996. Residues threonine 1221–threonine 1632 form a glucoamylase region. The residue at position 1282 (tyrosine 1282) is a Sulfotyrosine. Asparagine 1323, asparagine 1364, and asparagine 1388 each carry an N-linked (GlcNAc...) asparagine glycan. Aspartate 1420 functions as the Nucleophile in the catalytic mechanism. Glutamate 1423 is a catalytic residue. The active-site Proton donor is the aspartate 1526. A P-type 3 domain is found at tryptophan 1850–asparagine 1896. Cystine bridges form between cysteine 1862-cysteine 1879 and cysteine 1874-cysteine 1892. 4 N-linked (GlcNAc...) asparagine glycosylation sites follow: asparagine 2499, asparagine 2568, asparagine 2738, and asparagine 2743.

It belongs to the glycosyl hydrolase 31 family. In terms of assembly, monomer. Post-translationally, N- and O-glycosylated. Does not undergo intracellular or extracellular proteolytic cleavage. In terms of processing, sulfated. Broadly expressed. Highly expressed in small intestine. Expressed in granulocytes.

The protein localises to the apical cell membrane. It carries out the reaction Hydrolysis of terminal, non-reducing (1-&gt;4)-linked alpha-D-glucose residues with release of alpha-D-glucose.. It catalyses the reaction D-maltoheptaose + H2O = D-maltohexaose + alpha-D-glucose. The catalysed reaction is D-maltohexaose + H2O = D-maltopentaose + alpha-D-glucose. The enzyme catalyses D-maltopentaose + H2O = D-maltotetraose + alpha-D-glucose. It carries out the reaction D-maltotetraose + H2O = D-maltotriose + alpha-D-glucose. It catalyses the reaction D-maltotriose + H2O = D-maltose + alpha-D-glucose. The catalysed reaction is D-maltose + H2O = alpha-D-glucose + D-glucose. The enzyme catalyses nigerose + H2O = alpha-D-glucose + D-glucose. It carries out the reaction kojibiose + H2O = alpha-D-glucose + D-glucose. It catalyses the reaction isomaltose + H2O = alpha-D-glucose + D-glucose. The catalysed reaction is 6-O-alpha-D-glucopyranosyl-D-fructose + H2O = alpha-D-glucose + D-fructose. It functions in the pathway carbohydrate degradation. With respect to regulation, down-regulated at high oligomaltose concentration as it occurs during the mealtime. Down-regulated by anti-diabetic drug acarbose. Alpha-(1,4) exo-glucosidase involved in breakdown of dietary starch oligosaccharides in small intestine. Cleaves the non-reducing alpha-(1,4)-linked glucose residue in linear dextrins with retention of anomeric center stereochemistry. Mainly hydrolyzes short length oligomaltoses having two to seven glucose residues. Can cleave alpha-(1,2), alpha-(1,3) and alpha-(1,6) glycosidic linkages with lower efficiency, whereas beta glycosidic linkages are usually not hydrolyzed. The protein is Maltase-glucoamylase of Homo sapiens (Human).